A 211-amino-acid chain; its full sequence is Troponin I, cardiac muscle (211 aa).

The tract at residues 1 to 23 (MADESGDAAGCPPPAPAPIRRQS) is disordered. The residue at position 2 (Ala2) is an N-acetylalanine. Residue Ser5 is modified to Phosphoserine. 2 positions are modified to phosphoserine; by PKA and PKD/PRKD1: Ser23 and Ser24. Tyr27 is subject to Phosphotyrosine. Residue Thr32 is modified to Phosphothreonine; by STK4/MST1. An involved in binding TNC region spans residues 33–80 (EPHAKKKSKISASRKLQLKTLMLQIAKQELEREAEERRGEKGRALSTR). A phosphoserine; by PKC/PRKCE mark is found at Ser43 and Ser45. Thr52 carries the post-translational modification Phosphothreonine; by STK4/MST1. Ser78 carries the post-translational modification Phosphoserine. Position 79 is a phosphothreonine (Thr79). Thr130 and Thr144 each carry phosphothreonine; by STK4/MST1. The segment at 130-150 (TQKIFDLRGKFKRPTLRRVRI) is involved in binding TNC and actin. Position 151 is a phosphoserine; by PAK3 (Ser151). Ser167 carries the post-translational modification Phosphoserine. The residue at position 182 (Thr182) is a Phosphothreonine. Phosphoserine is present on Ser200.

It belongs to the troponin I family. As to quaternary structure, binds to actin and tropomyosin. Interacts with TRIM63. Interacts with STK4/MST1. Post-translationally, phosphorylated at Ser-23 and Ser-24 by PRKD1; phosphorylation reduces myofilament calcium sensitivity. Phosphorylated preferentially at Thr-32. Phosphorylation by STK4/MST1 alters its binding affinity to TNNC1 (cardiac Tn-C) and TNNT2 (cardiac Tn-T). Phosphorylated at Ser-43 and Ser-45 by PRKCE; phosphorylation increases myocardium contractile dysfunction.

Its function is as follows. Troponin I is the inhibitory subunit of troponin, the thin filament regulatory complex which confers calcium-sensitivity to striated muscle actomyosin ATPase activity. This Canis lupus familiaris (Dog) protein is Troponin I, cardiac muscle (TNNI3).